We begin with the raw amino-acid sequence, 956 residues long: Pollen-specific leucine-rich repeat extensin-like protein 1 (956 aa).

Positions 1 to 30 (MTRRTMEKPFGCFLLLFCFTISIFFYSAAA) are cleaved as a signal peptide. LRR repeat units follow at residues 39–59 (LTRR…DIEY), 60–84 (EVDL…AWKK), 119–143 (VLVV…LGLL), 144–166 (TDVA…SLSK), 168–191 (TLMY…ALSW), 192–215 (PSLK…IFDK), 217–238 (LDAI…IGKS), 240–261 (ASVV…IGQM), 262–285 (KNLN…IGSL), 287–309 (NVTV…LSGL), and 310–332 (ANVE…NICK). N-linked (GlcNAc...) asparagine glycosylation is found at Asn-273 and Asn-287. Asn-338 carries N-linked (GlcNAc...) asparagine glycosylation. Residues 355 to 377 (PGSSQEKQFDDTSNCLQNRPNQK) are compositionally biased toward polar residues. 2 disordered regions span residues 355-380 (PGSS…KSAK) and 397-956 (CAGG…FPGY). Positions 408–417 (SPKPTPTPKA) are enriched in pro residues. Basic and acidic residues-rich tracts occupy residues 431 to 441 (EPSKPKPEESP) and 452 to 534 (TPSH…EESP). Pro residues predominate over residues 640 to 830 (QSPPVHSPPP…KPVTPLPPAT (191 aa)). Residues 651 to 956 (PPVHSPPPPV…SPPPPMFPGY (306 aa)) form a contains the Ser-Pro(4) repeats region. Residues 837 to 852 (PTPSSSESGEISTPVQ) show a composition bias toward polar residues. Positions 947–956 (SPPPPMFPGY) are enriched in pro residues.

Hydroxylated on proline residues in the S-P-P-P-P repeat. In terms of processing, O-glycosylated on hydroxyprolines. As to expression, expressed in flowers, stamen, pollen, and pollinated carpels.

It localises to the secreted. It is found in the cell wall. Functionally, modulates cell morphogenesis by regulating cell wall formation and assembly, and/or growth polarization. This Arabidopsis thaliana (Mouse-ear cress) protein is Pollen-specific leucine-rich repeat extensin-like protein 1 (PEX1).